Consider the following 589-residue polypeptide: Protein FAM117B (589 aa).

The tract at residues 1–310 (MSQRVRRNGS…RDKERQSPFH (310 aa)) is disordered. Residue serine 10 is modified to Phosphoserine. Residues 16 to 29 (SLGGGAVATAGGPG) are compositionally biased toward gly residues. A compositionally biased stretch (low complexity) spans 45-56 (QQQQQQHGSPTR). The span at 57–85 (SGGGGGGNNNGGCCGGASGPAGGGGGGGP) shows a compositional bias: gly residues. Serine 106 carries the post-translational modification Phosphoserine. Residues 108 to 136 (TVATQTGASATSTRGTSPTRSAAPGARGS) are compositionally biased toward low complexity. Residues 137–146 (PPRPPPPPPL) show a composition bias toward pro residues. Composition is skewed to low complexity over residues 147–158 (LGTVSSPSSSPT) and 207–220 (PSSS…RTSS). 4 positions are modified to phosphoserine: serine 210, serine 219, serine 220, and serine 273. Residues 292–302 (RSKHSSRHHRD) show a composition bias toward basic residues. Serine 345 and serine 391 each carry phosphoserine. Disordered stretches follow at residues 370-464 (QDIP…NNSY) and 556-589 (STNT…EAEG). Residues 384-397 (QRSSSTRSIDTQTP) show a composition bias toward polar residues. Over residues 404–417 (SNNSSRSQSVSPTS) the composition is skewed to low complexity. Serine 449 and serine 457 each carry phosphoserine.

The polypeptide is Protein FAM117B (FAM117B) (Homo sapiens (Human)).